A 274-amino-acid chain; its full sequence is Tyrosinase (274 aa).

Positions 38, 54, 63, 190, 194, and 216 each coordinate Cu cation.

The protein belongs to the tyrosinase family. Cu(2+) is required as a cofactor.

It carries out the reaction 2 L-dopa + O2 = 2 L-dopaquinone + 2 H2O. It catalyses the reaction L-tyrosine + O2 = L-dopaquinone + H2O. This is a copper-containing oxidase that functions in the formation of pigments such as melanins and other polyphenolic compounds. This Streptomyces glaucescens protein is Tyrosinase (melC2).